The chain runs to 161 residues: 2-C-methyl-D-erythritol 2,4-cyclodiphosphate synthase (161 aa).

Residues aspartate 11 and histidine 13 each coordinate a divalent metal cation. Residues 11 to 13 and 37 to 38 contribute to the 4-CDP-2-C-methyl-D-erythritol 2-phosphate site; these read DIH and HS. A divalent metal cation is bound at residue histidine 45. 4-CDP-2-C-methyl-D-erythritol 2-phosphate-binding positions include 59–61 and 135–138; these read DIG and TTNE.

This sequence belongs to the IspF family. Homotrimer. The cofactor is a divalent metal cation.

It carries out the reaction 4-CDP-2-C-methyl-D-erythritol 2-phosphate = 2-C-methyl-D-erythritol 2,4-cyclic diphosphate + CMP. It participates in isoprenoid biosynthesis; isopentenyl diphosphate biosynthesis via DXP pathway; isopentenyl diphosphate from 1-deoxy-D-xylulose 5-phosphate: step 4/6. Functionally, involved in the biosynthesis of isopentenyl diphosphate (IPP) and dimethylallyl diphosphate (DMAPP), two major building blocks of isoprenoid compounds. Catalyzes the conversion of 4-diphosphocytidyl-2-C-methyl-D-erythritol 2-phosphate (CDP-ME2P) to 2-C-methyl-D-erythritol 2,4-cyclodiphosphate (ME-CPP) with a corresponding release of cytidine 5-monophosphate (CMP). This chain is 2-C-methyl-D-erythritol 2,4-cyclodiphosphate synthase, found in Acaryochloris marina (strain MBIC 11017).